Here is a 451-residue protein sequence, read N- to C-terminus: Chromosomal replication initiator protein DnaA (451 aa).

Residues 1–73 (MQDNLPQIWE…SNALKQTTSK (73 aa)) form a domain I, interacts with DnaA modulators region. Residues 73 to 113 (KNFEIRFIVPSEEKISKTEESQKKLEGSVNISVASDQFVSN) form a domain II region. Positions 114-330 (NLNPKYTFDT…GALIRIVAYS (217 aa)) are domain III, AAA+ region. Residues Gly-158, Gly-160, Lys-161, and Thr-162 each contribute to the ATP site. The segment at 331–451 (SLTNSEITVE…ERIAKEIKGD (121 aa)) is domain IV, binds dsDNA.

The protein belongs to the DnaA family. Oligomerizes as a right-handed, spiral filament on DNA at oriC.

It is found in the cytoplasm. Functionally, plays an essential role in the initiation and regulation of chromosomal replication. ATP-DnaA binds to the origin of replication (oriC) to initiate formation of the DNA replication initiation complex once per cell cycle. Binds the DnaA box (a 9 base pair repeat at the origin) and separates the double-stranded (ds)DNA. Forms a right-handed helical filament on oriC DNA; dsDNA binds to the exterior of the filament while single-stranded (ss)DNA is stabiized in the filament's interior. The ATP-DnaA-oriC complex binds and stabilizes one strand of the AT-rich DNA unwinding element (DUE), permitting loading of DNA polymerase. After initiation quickly degrades to an ADP-DnaA complex that is not apt for DNA replication. Binds acidic phospholipids. The chain is Chromosomal replication initiator protein DnaA from Alkaliphilus oremlandii (strain OhILAs) (Clostridium oremlandii (strain OhILAs)).